A 758-amino-acid chain; its full sequence is MINIEDISKSSNQSEEKQLKSTSSKPKYSFAAKSLFKGSNNITPYYLSTSNTFQCVASESIQTWLLSDDGHIFTSSGNFVLDVSSGGYFVELVQLNSNSKTQIWTIDTTNNKIQNQGNGKYLDIDNLNIYVAPLNGNATQQWTTFRRAPIPTGNWGYFQSKQLDSNNNYWGLSVLNNSTSYNTSVVMNKVQAKSIKRWSHFITFGGNLVLDIGPSINGSKTYYLNTNVYKANDLMQQWGINENNQIFNQYYPNLCIGFVGELGVDSTVNCVLAQPSSACDINFQWIANPTYSLNQIVSEVPEQFPAYTSGDLLASYQYLSDDATNGYTDDIRSLYTSINVSLENFYVNVTNATCPSSIHQLKIFQNQIKNELTYAINVRLVFDNYSGFYSKLFSQGSTNLTNLANLINVDMSSDQVVNGNYTDAITSVFYAIISEIPIGGSIIANIGESAEEFGELDAESNDSGPSTYQVTLSKLYDHLNENYENEMANAQRMKNTILQDWGMMSKTFTLCFLPTNNPSSLNMNGFDFQKISSIASLAYLTAMIQMLLPTNYQIYFTPAGYYAPVSSDDYSYTDSTGTYIMAEIDNCNSHPPKALTDKLWKNGVSKQEVFTSSYGWNLATSVTYYNMVGKYGGMFKLSFPTVKNITSVPMQFVMTNGSDRVGTFNVKTHFAGLASTYYNSGALGHHYYDIAVTDIDRNKVANFTVDNNLEALEGSYVSIKTNSLVVQPGYVVGNPTCNQGSFSQGFAASILIPIYKSN.

The tract at residues 1–22 is disordered; that stretch reads MINIEDISKSSNQSEEKQLKST. 2 consecutive Ricin B-type lectin domains span residues 25 to 145 and 156 to 288; these read KPKY…WTTF and GYFQ…WIAN.

This sequence belongs to the cup family.

It localises to the cytoplasm. The protein localises to the membrane. May play an important role in stabilizing and/or regulating the cell membrane during Ca(2+) stress or certain stages of development. The chain is Calcium up-regulated protein E (cupE) from Dictyostelium discoideum (Social amoeba).